Reading from the N-terminus, the 326-residue chain is Tetraacyldisaccharide 4'-kinase (326 aa).

An ATP-binding site is contributed by 55–62; the sequence is TAGGNGKT.

This sequence belongs to the LpxK family.

It catalyses the reaction a lipid A disaccharide + ATP = a lipid IVA + ADP + H(+). The protein operates within glycolipid biosynthesis; lipid IV(A) biosynthesis; lipid IV(A) from (3R)-3-hydroxytetradecanoyl-[acyl-carrier-protein] and UDP-N-acetyl-alpha-D-glucosamine: step 6/6. In terms of biological role, transfers the gamma-phosphate of ATP to the 4'-position of a tetraacyldisaccharide 1-phosphate intermediate (termed DS-1-P) to form tetraacyldisaccharide 1,4'-bis-phosphate (lipid IVA). The polypeptide is Tetraacyldisaccharide 4'-kinase (Serratia proteamaculans (strain 568)).